We begin with the raw amino-acid sequence, 479 residues long: Poly(A) polymerase catalytic subunit (479 aa).

Active-site residues include Asp-202 and Asp-204. Ca(2+) contacts are provided by Asp-202, Asp-204, and Asp-253.

It belongs to the poxviridae poly(A) polymerase catalytic subunit family. Heterodimer of a large (catalytic) subunit and a small (regulatory) subunit.

The enzyme catalyses RNA(n) + ATP = RNA(n)-3'-adenine ribonucleotide + diphosphate. Polymerase that creates the 3'-poly(A) tail of mRNA's. This chain is Poly(A) polymerase catalytic subunit (OPG063), found in Homo sapiens (Human).